The sequence spans 155 residues: SsrA-binding protein (155 aa).

It belongs to the SmpB family.

The protein localises to the cytoplasm. Functionally, required for rescue of stalled ribosomes mediated by trans-translation. Binds to transfer-messenger RNA (tmRNA), required for stable association of tmRNA with ribosomes. tmRNA and SmpB together mimic tRNA shape, replacing the anticodon stem-loop with SmpB. tmRNA is encoded by the ssrA gene; the 2 termini fold to resemble tRNA(Ala) and it encodes a 'tag peptide', a short internal open reading frame. During trans-translation Ala-aminoacylated tmRNA acts like a tRNA, entering the A-site of stalled ribosomes, displacing the stalled mRNA. The ribosome then switches to translate the ORF on the tmRNA; the nascent peptide is terminated with the 'tag peptide' encoded by the tmRNA and targeted for degradation. The ribosome is freed to recommence translation, which seems to be the essential function of trans-translation. This chain is SsrA-binding protein, found in Streptococcus equi subsp. zooepidemicus (strain H70).